A 339-amino-acid chain; its full sequence is DNA-directed RNA polymerase subunit alpha (339 aa).

The tract at residues 1-237 (MENELMYMNW…EQMNVFINFD (237 aa)) is alpha N-terminal domain (alpha-NTD). Positions 256–339 (FNENLYRSVN…PPAEDNKEGE (84 aa)) are alpha C-terminal domain (alpha-CTD).

Belongs to the RNA polymerase alpha chain family. As to quaternary structure, homodimer. The RNAP catalytic core consists of 2 alpha, 1 beta, 1 beta' and 1 omega subunit. When a sigma factor is associated with the core the holoenzyme is formed, which can initiate transcription.

The enzyme catalyses RNA(n) + a ribonucleoside 5'-triphosphate = RNA(n+1) + diphosphate. DNA-dependent RNA polymerase catalyzes the transcription of DNA into RNA using the four ribonucleoside triphosphates as substrates. The polypeptide is DNA-directed RNA polymerase subunit alpha (Desulfosudis oleivorans (strain DSM 6200 / JCM 39069 / Hxd3) (Desulfococcus oleovorans)).